Here is a 160-residue protein sequence, read N- to C-terminus: MHYFFIIVIWLLSINTAWADCWLQAEKMFNIESELLYAIAQQESAMKPGAIGHNRDGSTDLGLMQINSFHMKRLKKMGISEKQLLQDPCISVIVGASILSDMMKIYGYSWEAVGAYNAGTSPKRSDIRKRYAKKIWENYRKLKGMSAEEKNKRLSIAANK.

Residues 1–19 (MHYFFIIVIWLLSINTAWA) form the signal peptide.

Belongs to the IagB/IpgF/P19 family.

This is Invasion protein IagB (iagB) from Salmonella typhimurium (strain SL1344).